A 380-amino-acid chain; its full sequence is Epoxyqueuosine reductase (380 aa).

The active-site Proton donor is the D134. One can recognise a 4Fe-4S ferredoxin-type 1 domain in the interval 179–208 (PPDQPIEDQCGSCTKCIDICPTGALIQGGQ). [4Fe-4S] cluster is bound by residues C188, C191, C194, C198, C214, C240, C243, and C247. The 33-residue stretch at 226–258 (PEEYRDKIGNRIYGCDTCQTVCPKNKGMDFHNH) folds into the 4Fe-4S ferredoxin-type 2 domain.

Belongs to the QueG family. As to quaternary structure, monomer. Requires cob(II)alamin as cofactor. [4Fe-4S] cluster serves as cofactor.

It is found in the cytoplasm. The catalysed reaction is epoxyqueuosine(34) in tRNA + AH2 = queuosine(34) in tRNA + A + H2O. It participates in tRNA modification; tRNA-queuosine biosynthesis. Its function is as follows. Catalyzes the conversion of epoxyqueuosine (oQ) to queuosine (Q), which is a hypermodified base found in the wobble positions of tRNA(Asp), tRNA(Asn), tRNA(His) and tRNA(Tyr). This is Epoxyqueuosine reductase from Bacillus anthracis.